A 171-amino-acid polypeptide reads, in one-letter code: UPF0303 protein YPTS_2661 (171 aa).

It belongs to the UPF0303 family.

The protein is UPF0303 protein YPTS_2661 of Yersinia pseudotuberculosis serotype IB (strain PB1/+).